A 316-amino-acid chain; its full sequence is Chorismate mutase 3, chloroplastic (316 aa).

The N-terminal 47 residues, 1-47 (MEAKLLKPAFYNSPNLNLTNSSRLISRLSIWNDKSKVGLSSGSLFLR), are a transit peptide targeting the chloroplast. Arg-62 serves as a coordination point for L-phenylalanine. The Chorismate mutase domain maps to 62–316 (RVDESEYLKL…QIEYLLRRLD (255 aa)). Residues Arg-133 and 194–197 (NCGS) contribute to the L-tyrosine site. 194 to 197 (NCGS) lines the L-phenylalanine pocket.

Homodimer. Expressed in roots, stems, cauline leaves, flowers and siliques, and at lower levels in rosette leaves.

Its subcellular location is the plastid. It localises to the chloroplast. It catalyses the reaction chorismate = prephenate. Its pathway is metabolic intermediate biosynthesis; prephenate biosynthesis; prephenate from chorismate: step 1/1. With respect to regulation, allosterically inhibited by tyrosine and phenylalanine. According to another report, seems not to be repressed by tyrosine and phenylalanine. Activated by tryptophan, cysteine and histidine. May play a role in chloroplast biogenesis. This chain is Chorismate mutase 3, chloroplastic, found in Arabidopsis thaliana (Mouse-ear cress).